The sequence spans 184 residues: Envelope protein 169 (184 aa).

Topologically, residues Met-1–Lys-6 are intravirion. The chain crosses the membrane as a helical span at residues Met-7–Ile-27. Residues Ser-28–Leu-184 lie on the Virion surface side of the membrane.

It belongs to the asfivirus envelope protein p22 family.

The protein localises to the virion membrane. It is found in the host cell membrane. The chain is Envelope protein 169 from Ornithodoros (relapsing fever ticks).